The following is a 174-amino-acid chain: Glycine-rich protein 5 (174 aa).

A signal peptide spans 1-22 (MASKSLFLVALLVGSFAFTSFA).

In terms of tissue distribution, mostly expressed in immature seed pods, and, to a lower extent, in stems and leaves. Present in phloem and epiderm in leaves, stems, flowers and fruits.

Its subcellular location is the vacuole. Functionally, involved in organ growth by promoting cell elongation processes. The sequence is that of Glycine-rich protein 5 from Arabidopsis thaliana (Mouse-ear cress).